Consider the following 196-residue polypeptide: ATP-dependent Clp protease proteolytic subunit (196 aa).

Catalysis depends on Ser-96, which acts as the Nucleophile. His-121 is a catalytic residue.

This sequence belongs to the peptidase S14 family. In terms of assembly, fourteen ClpP subunits assemble into 2 heptameric rings which stack back to back to give a disk-like structure with a central cavity, resembling the structure of eukaryotic proteasomes.

The protein localises to the cytoplasm. It carries out the reaction Hydrolysis of proteins to small peptides in the presence of ATP and magnesium. alpha-casein is the usual test substrate. In the absence of ATP, only oligopeptides shorter than five residues are hydrolyzed (such as succinyl-Leu-Tyr-|-NHMec, and Leu-Tyr-Leu-|-Tyr-Trp, in which cleavage of the -Tyr-|-Leu- and -Tyr-|-Trp bonds also occurs).. Cleaves peptides in various proteins in a process that requires ATP hydrolysis. Has a chymotrypsin-like activity. Plays a major role in the degradation of misfolded proteins. This Streptococcus thermophilus (strain CNRZ 1066) protein is ATP-dependent Clp protease proteolytic subunit.